The chain runs to 1202 residues: DNA-directed RNA polymerase subunit beta (1202 aa).

This sequence belongs to the RNA polymerase beta chain family. As to quaternary structure, the RNAP catalytic core consists of 2 alpha, 1 beta, 1 beta' and 1 omega subunit. When a sigma factor is associated with the core the holoenzyme is formed, which can initiate transcription.

It carries out the reaction RNA(n) + a ribonucleoside 5'-triphosphate = RNA(n+1) + diphosphate. Its function is as follows. DNA-dependent RNA polymerase catalyzes the transcription of DNA into RNA using the four ribonucleoside triphosphates as substrates. The polypeptide is DNA-directed RNA polymerase subunit beta (Mycoplasmopsis synoviae (strain 53) (Mycoplasma synoviae)).